Reading from the N-terminus, the 202-residue chain is Large ribosomal subunit protein uL13 (202 aa).

It belongs to the universal ribosomal protein uL13 family.

The chain is Large ribosomal subunit protein uL13 from Caenorhabditis elegans.